The sequence spans 378 residues: mRNA cap guanine-N(7) methyltransferase (378 aa).

An mRNA cap 0 methyltransferase domain is found at Ser-24 to Lys-331. Asn-33–Asn-34 contributes to the mRNA binding site. Residues Lys-37, Ala-62, Asp-84, Asp-116, Gln-138, and Tyr-143 each contribute to the S-adenosyl-L-methionine site. Composition is skewed to basic and acidic residues over residues Glu-335–Lys-347 and Asp-356–Cys-378. The tract at residues Glu-335–Cys-378 is disordered.

It belongs to the class I-like SAM-binding methyltransferase superfamily. mRNA cap 0 methyltransferase family.

It localises to the nucleus. The enzyme catalyses a 5'-end (5'-triphosphoguanosine)-ribonucleoside in mRNA + S-adenosyl-L-methionine = a 5'-end (N(7)-methyl 5'-triphosphoguanosine)-ribonucleoside in mRNA + S-adenosyl-L-homocysteine. In terms of biological role, mRNA-capping methyltransferase that methylates the N7 position of the added guanosine to the 5'-cap structure of mRNAs. Binds RNA containing 5'-terminal GpppC. The sequence is that of mRNA cap guanine-N(7) methyltransferase from Caenorhabditis briggsae.